The chain runs to 412 residues: Intraflagellar transport protein che-13 (412 aa).

Disordered stretches follow at residues 1–21 and 162–193; these read MEEE…GSAI and PPKE…NFLD. A compositionally biased stretch (acidic residues) spans 165 to 193; sequence EEDEDTAVDEQDEDDDNDDIVEEPMNFLD. Residues 302–393 are a coiled coil; sequence QLASMMSKFR…VQIGVFEQSI (92 aa).

The protein belongs to the IFT57 family. As to quaternary structure, component of the IFT complex B composed of at least che-2, che-13, dyf-1, dyf-3, dyf-6, dyf-11, dyf-13, ift-20, ift-74, ift-81, ifta-2, osm-1, osm-5 and osm-6.

It is found in the cytoplasm. The protein resides in the cytoskeleton. The protein localises to the cilium axoneme. Functionally, component of the intraflagellar transport (IFT) complex B required for transport of proteins in the motile cilium. May be required for ciliary entrance and transport of specific ciliary cargo proteins such as che-3 which are related to motility. Required for the formation of chemosensory cilia that detect chemosensory cues. The protein is Intraflagellar transport protein che-13 of Caenorhabditis elegans.